A 311-amino-acid chain; its full sequence is Acetyl-coenzyme A carboxylase carboxyl transferase subunit alpha (311 aa).

Residues 36–286 (KLEKEVEKTF…KEYFIKSLAE (251 aa)) enclose the CoA carboxyltransferase C-terminal domain.

This sequence belongs to the AccA family. In terms of assembly, acetyl-CoA carboxylase is a heterohexamer composed of biotin carboxyl carrier protein (AccB), biotin carboxylase (AccC) and two subunits each of ACCase subunit alpha (AccA) and ACCase subunit beta (AccD).

It localises to the cytoplasm. The enzyme catalyses N(6)-carboxybiotinyl-L-lysyl-[protein] + acetyl-CoA = N(6)-biotinyl-L-lysyl-[protein] + malonyl-CoA. Its pathway is lipid metabolism; malonyl-CoA biosynthesis; malonyl-CoA from acetyl-CoA: step 1/1. In terms of biological role, component of the acetyl coenzyme A carboxylase (ACC) complex. First, biotin carboxylase catalyzes the carboxylation of biotin on its carrier protein (BCCP) and then the CO(2) group is transferred by the carboxyltransferase to acetyl-CoA to form malonyl-CoA. The polypeptide is Acetyl-coenzyme A carboxylase carboxyl transferase subunit alpha (Aliarcobacter butzleri (strain RM4018) (Arcobacter butzleri)).